Here is a 185-residue protein sequence, read N- to C-terminus: Protein C2-DOMAIN ABA-RELATED 9 (185 aa).

Residues 1–104 (MEDKPLGILR…LEAHQMELDF (104 aa)) form the C2 domain. Arginine 22, aspartate 23, aspartate 28, aspartate 74, lysine 75, aspartate 76, and aspartate 82 together coordinate Ca(2+).

The protein belongs to the plant CAR protein family. As to quaternary structure, binds to PYR/PYL/RCAR abscisic acid intracellular receptors in an ABA-independent manner, both at the plasma membrane and in the nucleus. Interacts with LOT1 in the nuleus; this interaction is repressed by abscisic acid (ABA) and is sensitive to calcium ion Ca(2+), leading to free CAR9 accumulation at the plasma membrane. Ca(2+) serves as cofactor.

The protein resides in the cell membrane. It localises to the nucleus. Stimulates the GTPase/ATPase activities of Obg-like ATPases. Mediates the transient calcium-dependent interaction of PYR/PYL/RCAR abscisic acid (ABA) receptors with the plasma membrane and thus regulates ABA sensitivity. The polypeptide is Protein C2-DOMAIN ABA-RELATED 9 (Arabidopsis thaliana (Mouse-ear cress)).